Consider the following 219-residue polypeptide: Ran-binding protein 1 homolog c (219 aa).

Residues 1-11 are compositionally biased toward basic and acidic residues; that stretch reads MASTEPERENR. Disordered stretches follow at residues 1–30 and 160–219; these read MAST…VAPI and QVGK…EAST. Acidic residues predominate over residues 12 to 23; that stretch reads EDETEVNEDEDT. Positions 26–161 constitute a RanBD1 domain; it reads QVAPIVRLEE…FTEIAESQQV (136 aa). Over residues 185 to 219 the composition is skewed to basic and acidic residues; that stretch reads SEEKAKEAEEKEPAKEDKETKKEKVEEEKKTEAST.

The protein resides in the nucleus. Its subcellular location is the nuclear pore complex. The sequence is that of Ran-binding protein 1 homolog c (RANBP1C) from Arabidopsis thaliana (Mouse-ear cress).